An 83-amino-acid polypeptide reads, in one-letter code: Short neurotoxin 3FTx-Oxy3 (83 aa).

A signal peptide spans 1 to 21 (MKTLLLTLVVVTIVCLDLGYT). Disulfide bonds link Cys24–Cys45, Cys38–Cys62, Cys64–Cys75, and Cys76–Cys81.

It belongs to the three-finger toxin family. Short-chain subfamily. Type I alpha-neurotoxin sub-subfamily. In terms of tissue distribution, expressed by the venom gland.

Its subcellular location is the secreted. Its function is as follows. Binds to muscle nicotinic acetylcholine receptor (nAChR) and inhibit acetylcholine from binding to the receptor, thereby impairing neuromuscular transmission. The protein is Short neurotoxin 3FTx-Oxy3 of Oxyuranus microlepidotus (Inland taipan).